The primary structure comprises 955 residues: UvrABC system protein A (955 aa).

Gly35–Ser42 lines the ATP pocket. ABC transporter domains are found at residues Trp322–Ile601 and Gly621–Lys951. Gly654–Ser661 is an ATP binding site. The C4-type zinc-finger motif lies at Cys754–Cys780.

The protein belongs to the ABC transporter superfamily. UvrA family. As to quaternary structure, forms a heterotetramer with UvrB during the search for lesions.

It is found in the cytoplasm. In terms of biological role, the UvrABC repair system catalyzes the recognition and processing of DNA lesions. UvrA is an ATPase and a DNA-binding protein. A damage recognition complex composed of 2 UvrA and 2 UvrB subunits scans DNA for abnormalities. When the presence of a lesion has been verified by UvrB, the UvrA molecules dissociate. The polypeptide is UvrABC system protein A (Rickettsia felis (strain ATCC VR-1525 / URRWXCal2) (Rickettsia azadi)).